Consider the following 318-residue polypeptide: Ribosomal RNA small subunit methyltransferase H (318 aa).

Residues alanine 35–histidine 37, aspartate 55, phenylalanine 84, aspartate 105, and glutamine 112 each bind S-adenosyl-L-methionine. Residues serine 294–arginine 318 form a disordered region.

This sequence belongs to the methyltransferase superfamily. RsmH family.

The protein resides in the cytoplasm. The enzyme catalyses cytidine(1402) in 16S rRNA + S-adenosyl-L-methionine = N(4)-methylcytidine(1402) in 16S rRNA + S-adenosyl-L-homocysteine + H(+). Functionally, specifically methylates the N4 position of cytidine in position 1402 (C1402) of 16S rRNA. The protein is Ribosomal RNA small subunit methyltransferase H of Enterococcus faecalis (strain ATCC 700802 / V583).